We begin with the raw amino-acid sequence, 159 residues long: CASP-like protein 5C1 (159 aa).

Residues M1–R6 lie on the Cytoplasmic side of the membrane. The chain crosses the membrane as a helical span at residues S7–F29. The Extracellular portion of the chain corresponds to S30–A48. The helical transmembrane segment at F49 to I69 threads the bilayer. The Cytoplasmic portion of the chain corresponds to D70–C94. A helical membrane pass occupies residues A95–L117. Residues H118–A134 lie on the Extracellular side of the membrane. The chain crosses the membrane as a helical span at residues M135 to V155. Residues A156–W159 lie on the Cytoplasmic side of the membrane.

It belongs to the Casparian strip membrane proteins (CASP) family. Homodimer and heterodimers.

It is found in the cell membrane. This chain is CASP-like protein 5C1, found in Zea mays (Maize).